The chain runs to 297 residues: Acetyl-coenzyme A carboxylase carboxyl transferase subunit beta (297 aa).

Positions methionine 1–proline 23 are disordered. Residues valine 26–glutamate 295 form the CoA carboxyltransferase N-terminal domain. Positions 30, 33, 49, and 52 each coordinate Zn(2+). A C4-type zinc finger spans residues cysteine 30–cysteine 52.

It belongs to the AccD/PCCB family. Acetyl-CoA carboxylase is a heterohexamer composed of biotin carboxyl carrier protein (AccB), biotin carboxylase (AccC) and two subunits each of ACCase subunit alpha (AccA) and ACCase subunit beta (AccD). Requires Zn(2+) as cofactor.

It is found in the cytoplasm. It carries out the reaction N(6)-carboxybiotinyl-L-lysyl-[protein] + acetyl-CoA = N(6)-biotinyl-L-lysyl-[protein] + malonyl-CoA. Its pathway is lipid metabolism; malonyl-CoA biosynthesis; malonyl-CoA from acetyl-CoA: step 1/1. In terms of biological role, component of the acetyl coenzyme A carboxylase (ACC) complex. Biotin carboxylase (BC) catalyzes the carboxylation of biotin on its carrier protein (BCCP) and then the CO(2) group is transferred by the transcarboxylase to acetyl-CoA to form malonyl-CoA. This Actinobacillus pleuropneumoniae serotype 7 (strain AP76) protein is Acetyl-coenzyme A carboxylase carboxyl transferase subunit beta.